A 146-amino-acid chain; its full sequence is Anti-sigma F factor (146 aa).

The protein belongs to the anti-sigma-factor family.

It carries out the reaction L-seryl-[protein] + ATP = O-phospho-L-seryl-[protein] + ADP + H(+). The catalysed reaction is L-threonyl-[protein] + ATP = O-phospho-L-threonyl-[protein] + ADP + H(+). Binds to sigma F and blocks its ability to form an RNA polymerase holoenzyme (E-sigma F). Phosphorylates SpoIIAA on a serine residue. This phosphorylation may enable SpoIIAA to act as an anti-anti-sigma factor that counteracts SpoIIAB and thus releases sigma F from inhibition. The protein is Anti-sigma F factor of Oceanobacillus iheyensis (strain DSM 14371 / CIP 107618 / JCM 11309 / KCTC 3954 / HTE831).